An 86-amino-acid polypeptide reads, in one-letter code: EMBRYO SURROUNDING FACTOR 1-like protein 2 (86 aa).

Positions 1–21 (MKSHIAIICIIMLSFFSMHEY) are cleaved as a signal peptide. 4 disulfide bridges follow: Cys-39–Cys-54, Cys-44–Cys-82, Cys-52–Cys-78, and Cys-55–Cys-65.

Belongs to the MEG family.

This chain is EMBRYO SURROUNDING FACTOR 1-like protein 2 (ESFL2), found in Arabidopsis thaliana (Mouse-ear cress).